A 466-amino-acid polypeptide reads, in one-letter code: Ribulose bisphosphate carboxylase large chain (466 aa).

Lysine 4 is subject to N6,N6,N6-trimethyllysine. Substrate contacts are provided by asparagine 113 and threonine 163. Lysine 165 functions as the Proton acceptor in the catalytic mechanism. Lysine 167 provides a ligand contact to substrate. 3 residues coordinate Mg(2+): lysine 191, aspartate 193, and glutamate 194. Position 191 is an N6-carboxylysine (lysine 191). Residue histidine 284 is the Proton acceptor of the active site. 3 residues coordinate substrate: arginine 285, histidine 317, and serine 369.

The protein belongs to the RuBisCO large chain family. Type I subfamily. Heterohexadecamer of 8 large chains and 8 small chains; disulfide-linked. The disulfide link is formed within the large subunit homodimers. The cofactor is Mg(2+). Post-translationally, the disulfide bond which can form in the large chain dimeric partners within the hexadecamer appears to be associated with oxidative stress and protein turnover.

Its subcellular location is the plastid. It localises to the chloroplast. It carries out the reaction 2 (2R)-3-phosphoglycerate + 2 H(+) = D-ribulose 1,5-bisphosphate + CO2 + H2O. It catalyses the reaction D-ribulose 1,5-bisphosphate + O2 = 2-phosphoglycolate + (2R)-3-phosphoglycerate + 2 H(+). In terms of biological role, ruBisCO catalyzes two reactions: the carboxylation of D-ribulose 1,5-bisphosphate, the primary event in carbon dioxide fixation, as well as the oxidative fragmentation of the pentose substrate in the photorespiration process. Both reactions occur simultaneously and in competition at the same active site. This chain is Ribulose bisphosphate carboxylase large chain, found in Aphelandra sinclairiana (Orange shrimp plant).